Consider the following 209-residue polypeptide: Thymidine kinase (209 aa).

ATP contacts are provided by residues 16–23 (GPMFAGKT) and 90–93 (DESQ). Catalysis depends on Glu-91, which acts as the Proton acceptor.

It belongs to the thymidine kinase family. Homotetramer.

Its subcellular location is the cytoplasm. The enzyme catalyses thymidine + ATP = dTMP + ADP + H(+). The sequence is that of Thymidine kinase from Aster yellows witches'-broom phytoplasma (strain AYWB).